A 549-amino-acid polypeptide reads, in one-letter code: Cell death protein 4 (549 aa).

One can recognise a CARD domain in the interval 1 to 91; it reads MLCEIECRAL…HLADFLEDYI (91 aa). The ATP site is built by Tyr-131, Gly-162, Gly-164, Lys-165, Ser-166, Val-167, Arg-273, Thr-367, and Tyr-369. The 285-residue stretch at 133 to 417 folds into the NB-ARC domain; sequence REYHVDRVIK…KLWSCVIPVD (285 aa). Mg(2+) is bound at residue Ser-166.

Associates as an asymmetric homodimer with ced-9. Only one ced-4 molecule within the dimer interacts directly with ced-9. Upon release from ced-9, forms a multimer, known as the apoptosome, and interacts with ced-3; the interaction results in ced-3 autoproteolytic cleavage and activation. Multiple oligomeric states of the apoptosome are observed including hexamers, heptamers and octamers. The hexamers likely represent a pre-mature state of the apoptosome and may contribute to the regulation of ced-3 activation. The apoptosome multimer also interacts with two processed ced-3 to form a stable holoenzyme. Interacts with sex-determining protein fem-1. May form a complex composed of ced-3, ced-4 and mac-1 or of ced-9, ced-4 and mac-1. Within the complex, interacts with mac-1.

It is found in the mitochondrion. The protein resides in the cytoplasm. Its subcellular location is the perinuclear region. Component of the egl-1, ced-9, ced-4 and ced-3 apoptotic signaling cascade required for the initiation of programmed cell death in cells fated to die during embryonic and postembryonic development. During oogenesis, required for germline apoptosis downstream of ced-9 and upstream of ced-3 but independently of egl-1. May regulate germline apoptosis in response to DNA damage, probably downstream of let-60/ras and mpk-1 pathway. Regulates CEP neuron apoptosis in response to high Al(3+) levels. During male tail morphogenesis, promotes apoptosis of the tail-spike cell upstream of ced-3 but independently of egl-1 and ced-9. May play a role in sex-specific cell apoptosis, probably by promoting ced-3-mediated cleavage of sex-determining protein fem-1. During larval development, required for the elimination of transient presynaptic components downstream of egl-1 and ced-9 and upstream of ced-3 apoptotic pathway. Downstream of calreticulin crt-1 and upstream of ced-3 and independently of egl-1 and ced-9, plays a role in the initial steps of axonal regrowth following axotomy. Together with ain-1, a component of the miRNA-induced-silencing complex (miRISC), and probably upstream of ced-3, regulates temporal cell fate patterning during larval development. May play a role in resistance to S.typhimurium-mediated infection. Its function is as follows. Plays a major role in programmed cell death. egl-1 binds to and directly inhibits the activity of ced-9, releasing the cell death activator ced-4 from a ced-9/ced-4-containing protein complex and allowing ced-4 to induce caspase ced-3 autoproteolytic cleavage and activation. Also forms a holoenzyme with processed ced-3 enhancing ced-3 activity. In terms of biological role, prevents programmed cell death. This chain is Cell death protein 4 (ced-4), found in Caenorhabditis elegans.